The sequence spans 269 residues: MNMEDAARGIELVRKQKPLVHNMTNNVVTNFTANGLLALGASPVMAYAREEAADMAKIAGALVLNIGTLSRESVEAMIIAGKSANEHGVPVIFDPVGAGATPFRTESAQAIMRKVKVSAVRGNAAEIANTLGEDWLIKGVDAGEESGDRTELAKKAAKLWDTAVIITGAEDVITDGTKTYTVGNGHQLLTKVTGTGCLFTSVIGAFCAVEKDVCRAAVSAAAFYGTAAELAAAKTESRGPGSFQIEFLNQLAAVEAMDIKERGRIREVE.

M45 contacts substrate. The ATP site is built by R121 and T167. Residue G194 participates in substrate binding.

This sequence belongs to the Thz kinase family. Requires Mg(2+) as cofactor.

The enzyme catalyses 5-(2-hydroxyethyl)-4-methylthiazole + ATP = 4-methyl-5-(2-phosphooxyethyl)-thiazole + ADP + H(+). It functions in the pathway cofactor biosynthesis; thiamine diphosphate biosynthesis; 4-methyl-5-(2-phosphoethyl)-thiazole from 5-(2-hydroxyethyl)-4-methylthiazole: step 1/1. Catalyzes the phosphorylation of the hydroxyl group of 4-methyl-5-beta-hydroxyethylthiazole (THZ). The polypeptide is Hydroxyethylthiazole kinase (Bacillus licheniformis (strain ATCC 14580 / DSM 13 / JCM 2505 / CCUG 7422 / NBRC 12200 / NCIMB 9375 / NCTC 10341 / NRRL NRS-1264 / Gibson 46)).